The primary structure comprises 117 residues: Large ribosomal subunit protein uL18 (117 aa).

Belongs to the universal ribosomal protein uL18 family. Part of the 50S ribosomal subunit; part of the 5S rRNA/L5/L18/L25 subcomplex. Contacts the 5S and 23S rRNAs.

Its function is as follows. This is one of the proteins that bind and probably mediate the attachment of the 5S RNA into the large ribosomal subunit, where it forms part of the central protuberance. The protein is Large ribosomal subunit protein uL18 of Aliivibrio fischeri (strain MJ11) (Vibrio fischeri).